The primary structure comprises 462 residues: Microspherule protein 1 (462 aa).

The residue at position 1 (Met1) is an N-acetylmethionine. The disordered stretch occupies residues 1 to 130 (MDKDSQGLLD…KSKQPLQVTK (130 aa)). The residue at position 22 (Ser22) is a Phosphoserine. Residues 43-55 (PKRRSSSRFIKRK) show a composition bias toward basic residues. Positions 81–90 (SGRCSGSEPS) are enriched in low complexity. Ser102 is subject to Phosphoserine. Thr103 is subject to Phosphothreonine. Over residues 103–112 (TPVPPSPAPT) the composition is skewed to pro residues. Phosphoserine is present on Ser108. The short motif at 113–123 (PGLTKRVKKSK) is the Nuclear localization signal element. 2 positions are modified to N6-acetyllysine: Lys123 and Lys130. Position 282 is a phosphoserine (Ser282). Residues 301-335 (LEHELTVADRRQKREIRQLEQELHKWQVLVDSITG) adopt a coiled-coil conformation. Residues 363 to 419 (ITLGRATKDNQIDVDLSLEGPAWKISRKQGVIKLKNNGDFFIANEGRRPIYIDGRPV) form the FHA domain. A UBR5-degron motif is present at residues 389 to 396 (RKQGVIKL).

Component of the chromatin remodeling INO80 complex; specifically part of a complex module associated with the N-terminus of INO80. Component of some MLL1/MLL complex, at least composed of the core components KMT2A/MLL1, ASH2L, HCFC1, WDR5 and RBBP5, as well as the facultative components BACC1, CHD8, E2F6, HSP70, INO80C, KANSL1, LAS1L, MAX, MCRS1, MGA, KAT8/MOF, PELP1, PHF20, PRP31, RING2, RUVB1/TIP49A, RUVB2/TIP49B, SENP3, TAF1, TAF4, TAF6, TAF7, TAF9 and TEX10. Component of the NSL complex at least composed of MOF/KAT8, KANSL1, KANSL2, KANSL3, MCRS1, PHF20, OGT1/OGT, WDR5 and HCFC1. Interacts with NOP2. Interacts with PINX1. Interacts with TERT. Interacts with CCDC85B. Interacts with DAXX. Interacts (via N-terminus) with FMR1 (via phosphorylated form). Interacts with FXR1 and FXR2. Interacts (via C-terminus) with NDE1 (via C-terminus); phosphorylation of NDE1 inhibits the interaction. Interacts (via C-terminus) with ZNF375. Interacts (via C-terminus) with active GTP-bound RHEB (via N-terminus) under conditions of high amino acid concentration; the interaction promotes mTORC1 complex activation by RHEB. Interacts (via N-terminus) with the mTORC1 complex; the interaction ensures mTORC1 activation by RHEB. Interacts with DYNC1I1; the interaction is required for the proper distribution of centriolar satellites. Interacts with TTBK2; the interaction is required for recruitment of TTBK2 to the mother centriole. Interacts with KIF2A; the interaction occurs during mitosis and facilitates chromosome alignment. Post-translationally, ubiquitinated by UBR5 when not assembled in the INO80 complex, leading to its degradation: UBR5 recognizes and binds a degron that is not accessible when MCRS1 is part of the INO80 complex. Phosphorylated by AURKA on Ser-35 and/or Ser-36 during mitosis which is required for kinetochore fiber assembly and mitotic progression but not for spindle localization or for chromosome-induced microtuble aster formation. Also phosphorylated by AURKA on Ser-85 and/or Ser-87. Phosphorylated by TTK/MPS1 which enhances recruitment of KIF2A to the minus end of spindle microtubules and facilitates precise chromosome segregation.

It localises to the nucleus. The protein localises to the nucleolus. Its subcellular location is the cytoplasm. It is found in the cytoskeleton. The protein resides in the microtubule organizing center. It localises to the centrosome. The protein localises to the spindle pole. Its subcellular location is the chromosome. It is found in the centromere. The protein resides in the kinetochore. It localises to the lysosome. The protein localises to the centriolar satellite. Modulates the transcription repressor activity of DAXX by recruiting it to the nucleolus. As part of the NSL complex it may be involved in acetylation of nucleosomal histone H4 on several lysine residues. Putative regulatory component of the chromatin remodeling INO80 complex which is involved in transcriptional regulation, DNA replication and probably DNA repair. May also be an inhibitor of TERT telomerase activity. Binds to G-quadruplex structures in mRNA. Binds to RNA homomer poly(G) and poly(U). Maintains RHEB at the lysosome in its active GTP-bound form and prevents its interaction with the mTORC1 complex inhibitor TSC2, ensuring activation of the mTORC1 complex by RHEB. Stabilizes the minus ends of kinetochore fibers by protecting them from depolymerization, ensuring functional spindle assembly during mitosis. Following phosphorylation by TTK/MPS1, enhances recruitment of KIF2A to the minus ends of mitotic spindle microtubules which promotes chromosome alignment. Regulates the morphology of microtubule minus ends in mitotic spindle by maintaining them in a closed conformation characterized by the presence of an electron-dense cap. Regulates G2/M transition and spindle assembly during oocyte meiosis. Mediates histone modifications and transcriptional regulation in germinal vesicle oocytes which are required for meiotic progression. Also regulates microtubule nucleation and spindle assembly by activating aurora kinases during oocyte meiosis. Contributes to the establishment of centriolar satellites and also plays a role in primary cilium formation by recruiting TTBK2 to the mother centriole which is necessary for removal of the CP110 cap from the mother centriole, an early step in ciliogenesis. Required for epiblast development during early embryogenesis. Essential for cell viability. In Mus musculus (Mouse), this protein is Microspherule protein 1 (Mcrs1).